The primary structure comprises 359 residues: Type-1 angiotensin II receptor (359 aa).

At 1–25 (MALNSSADDGIKRIQDDCPKAGRHS) the chain is on the extracellular side. Asn-4 is a glycosylation site (N-linked (GlcNAc...) asparagine). Gln-15 and Asp-17 together coordinate angiotensin II. 2 disulfide bridges follow: Cys-18–Cys-274 and Cys-101–Cys-180. A helical membrane pass occupies residues 26–55 (YIFVMIPTLYSIIFVVGIFGNSLVVIVIYF). At 56–61 (YMKLKT) the chain is on the cytoplasmic side. A helical transmembrane segment spans residues 62 to 89 (VASVFLLNLALADLCFLLTLPVWAVYTA). Residues 90–98 (MEYRWPFGN) are Extracellular-facing. A helical membrane pass occupies residues 99–125 (HLCKIASAGISFNLYASVFLLTCLSID). Residues 126 to 141 (RYLAIVHPMKSRLRRT) are Cytoplasmic-facing. A helical transmembrane segment spans residues 142-165 (MLVAKVTCVVIWLLAGLASLPAVI). Residues 166-190 (HRNVYFIENTNSTVCAFHYESQNST) lie on the Extracellular side of the membrane. Arg-167 provides a ligand contact to angiotensin II. N-linked (GlcNAc...) asparagine glycosylation is present at Asn-176. 3 residues coordinate angiotensin II: Phe-182, His-183, and Tyr-184. Asn-188 is a glycosylation site (N-linked (GlcNAc...) asparagine). A helical transmembrane segment spans residues 191-216 (LPVGLGLTKNILGFMFPFLIILTSYT). Lys-199 lines the angiotensin II pocket. At 217–239 (LIWKALKKAYEIQKNKPRNDDIF) the chain is on the cytoplasmic side. A helical membrane pass occupies residues 240–268 (RIIMAIVLFFFFSWIPHQIFTFLDVLIQL). Residues 269-278 (GVIRDCKIAD) are Extracellular-facing. A helical membrane pass occupies residues 279-304 (VVDTAMPITICIAYFNNCLNPLFYGF). At 305 to 359 (LGKKFKKYFLQLLKYIPPKAKSHSSLSTKMSTLSYRPSDNMNSSAKKPASCFEVE) the chain is on the cytoplasmic side. A lipid anchor (S-palmitoyl cysteine) is attached at Cys-355.

This sequence belongs to the G-protein coupled receptor 1 family. In terms of assembly, interacts with MAS1. Interacts with ARRB1. Interacts with FLNA (via filamin repeat 21); increases PKA-mediated phosphorylation of FLNA. Post-translationally, C-terminal Ser or Thr residues may be phosphorylated.

It is found in the cell membrane. Receptor for angiotensin II, a vasoconstricting peptide, which acts as a key regulator of blood pressure and sodium retention by the kidney. The activated receptor in turn couples to G-alpha proteins G(q) (GNAQ, GNA11, GNA14 or GNA15) and thus activates phospholipase C and increases the cytosolic Ca(2+) concentrations, which in turn triggers cellular responses such as stimulation of protein kinase C. The chain is Type-1 angiotensin II receptor (AGTR1) from Meriones unguiculatus (Mongolian jird).